We begin with the raw amino-acid sequence, 333 residues long: Protein-methionine-sulfoxide reductase catalytic subunit MsrP (333 aa).

Positions 1–43 form a signal peptide, tat-type signal; the sequence is MHKHRKPTEADVTPESLFYQRRRILKALGISAAALSLPFSAQA. Residues Asn87, 90–91, Cys145, Thr180, Asn232, Arg237, and 248–250 contribute to the Mo-molybdopterin site; these read YE and NIK.

Belongs to the MsrP family. As to quaternary structure, heterodimer of a catalytic subunit (MsrP) and a heme-binding subunit (MsrQ). Mo-molybdopterin is required as a cofactor. Predicted to be exported by the Tat system. The position of the signal peptide cleavage has not been experimentally proven.

It localises to the periplasm. The enzyme catalyses L-methionyl-[protein] + a quinone + H2O = L-methionyl-(S)-S-oxide-[protein] + a quinol. It carries out the reaction L-methionyl-[protein] + a quinone + H2O = L-methionyl-(R)-S-oxide-[protein] + a quinol. Its function is as follows. Part of the MsrPQ system that repairs oxidized periplasmic proteins containing methionine sulfoxide residues (Met-O), using respiratory chain electrons. Thus protects these proteins from oxidative-stress damage caused by reactive species of oxygen and chlorine generated by the host defense mechanisms. MsrPQ is essential for the maintenance of envelope integrity under bleach stress, rescuing a wide series of structurally unrelated periplasmic proteins from methionine oxidation. The catalytic subunit MsrP is non-stereospecific, being able to reduce both (R-) and (S-) diastereoisomers of methionine sulfoxide. The chain is Protein-methionine-sulfoxide reductase catalytic subunit MsrP from Pectobacterium carotovorum subsp. carotovorum (strain PC1).